The chain runs to 104 residues: Large ribosomal subunit protein bL21 (104 aa).

This sequence belongs to the bacterial ribosomal protein bL21 family. In terms of assembly, part of the 50S ribosomal subunit. Contacts protein L20.

Its function is as follows. This protein binds to 23S rRNA in the presence of protein L20. This chain is Large ribosomal subunit protein bL21, found in Francisella philomiragia subsp. philomiragia (strain ATCC 25017 / CCUG 19701 / FSC 153 / O#319-036).